The sequence spans 1396 residues: MKALLDLFKQVTQEEEFDAIKIGIASPDKIRSWSYGEVKKPETINYRTFKPERDGLFCARIFGPVKDYECLCGKYKRLKHRGVICEKCGVEVTLSKVRRERMGHIELASPTAHIWFLKSLPSRLGMVLDMTLRDIERVLYFEAYVVTDPGMTPMQYRQLLTEEDFLDKEDQYGEEFVAMMGAEAVKELLKKLDLDAEIEGLRRELETTNSDTKIKKIAKRLKVLEAFQRSGMKPEWMILEVLPVLPPELRPLVPLDGGRFATSDLNDLYRRVINRNNRLKRLLELRAPDIIVRNEKRMLQESVDSLLDNGRRGKAMTGANKRPLKSLADMIKGKGGRFRQNLLGKRVDYSGRSVITVGPTLRLHQCGLPKKMALELFKPFIFHKLEVMGLASTIKAAKKLVEQEVPEVWDILEEVIREHPVLLNRAPTLHRLGIQAFEPVLIEGKAIQLHPLVCAAFNADFDGDQMAVHVPLSLEAQMEARTLMLATNNVLSPANGEPIIVPSQDIVLGLYYMTRDKVNGKGEGMVFADTKEVHRAYETRQVELATRITVRLKEWEKDEQGEFQPVIKRYNTTVGRAILSDILPKGLPFEHINKALKKKEISKLINVSFRRCGIRDTVIFADQLMYTGFAYSTRGGISICVDDMQIPVKKSELLGEANKEVKEIEEQYRQGLVTQGERYNKVVDIWGRTGDKIAKAMMDELSKQKVLDREGKEVDQESFNSIYMMADSGARGSAAQIKQLAGMRGLMAKPDGSIIETPITANFREGLTVLQYFISTHGARKGLADTALKTANSGYLTRRLVDVTQDLVVIEDDCGTSNGFTMKAVLQGGDVIEALRDRILGRVTAVDVVDPSTGETVIEAGTLMDEHLVDLVDSLGIDEVKVRTAITCDTRYGLCAKCYGRDLARGKQVNAGEAIGVIAAQSIGEPGTQLTMRTFHIGGAASRNAAASQVEGKSNGTVRFSSQMRYVANTKGELIVITRSGEVVIHDDMGRERERRKVPYGATLMVTDGLQIKAGAVLATWDPHTRPIITEYAGRVKFENVEEGNTVAKQTDEVTGLSTLVVIDPKRRAGSQSKMLRPLVKLLDDNGNEVKLAGSDASVSITFQVGAIITVRDGQDVGKGEVLARIPQESSKTRDITGGLPRVAELFEARSPKDAGMLAEVTGTVSFGKDTKGKQRLIITDLEGNGYENLIPKDKHVLVHDGQVVNRGESIVDGPVDPHDILRLQGIEALARYIVQEVQEVYRLQGVKINDKHIEVIIRQMLRRVIITDSGDTEFIQGEQVERADVLEMNDKMMAENKEPAQYENVLLGITKASLSTDSFISAASFQETTRVLTEAAIMGKRDDLRGLKENVIVGRLIPAGTGLAYHRTRRRQNLGLDAGESMLFDPAPAALESGE.

Residues cysteine 70, cysteine 72, cysteine 85, and cysteine 88 each contribute to the Zn(2+) site. Positions 460, 462, and 464 each coordinate Mg(2+). Zn(2+) is bound by residues cysteine 814, cysteine 888, cysteine 895, and cysteine 898.

This sequence belongs to the RNA polymerase beta' chain family. The RNAP catalytic core consists of 2 alpha, 1 beta, 1 beta' and 1 omega subunit. When a sigma factor is associated with the core the holoenzyme is formed, which can initiate transcription. Mg(2+) serves as cofactor. It depends on Zn(2+) as a cofactor.

It catalyses the reaction RNA(n) + a ribonucleoside 5'-triphosphate = RNA(n+1) + diphosphate. Its function is as follows. DNA-dependent RNA polymerase catalyzes the transcription of DNA into RNA using the four ribonucleoside triphosphates as substrates. This chain is DNA-directed RNA polymerase subunit beta', found in Chromobacterium violaceum (strain ATCC 12472 / DSM 30191 / JCM 1249 / CCUG 213 / NBRC 12614 / NCIMB 9131 / NCTC 9757 / MK).